We begin with the raw amino-acid sequence, 465 residues long: uncharacterized protein (465 aa).

Positions 13–71 (GPRPGLRLELQAIDLDRDGHGLARWQGWVVVVPGLLPGERAKVQLQQRQKSRWLSRISE) constitute a TRAM domain. [4Fe-4S] cluster contacts are provided by cysteine 84, cysteine 90, cysteine 93, and cysteine 171. S-adenosyl-L-methionine is bound by residues glutamine 294, tyrosine 324, glutamate 345, and aspartate 391. The active-site Nucleophile is cysteine 418.

Belongs to the class I-like SAM-binding methyltransferase superfamily. RNA M5U methyltransferase family.

This is an uncharacterized protein from Parasynechococcus marenigrum (strain WH8102).